A 183-amino-acid polypeptide reads, in one-letter code: ESX-1 secretion-associated protein EspH (183 aa).

The span at 1 to 16 shows a compositional bias: acidic residues; that stretch reads MVDPPGNDDDHGDLDA. The interval 1-32 is disordered; sequence MVDPPGNDDDHGDLDALDFSAAHTNEASPLDA.

The chain is ESX-1 secretion-associated protein EspH from Mycobacterium tuberculosis (strain ATCC 25618 / H37Rv).